A 92-amino-acid polypeptide reads, in one-letter code: Small ribosomal subunit protein bS18 (92 aa).

This sequence belongs to the bacterial ribosomal protein bS18 family. Part of the 30S ribosomal subunit. Forms a tight heterodimer with protein bS6.

Functionally, binds as a heterodimer with protein bS6 to the central domain of the 16S rRNA, where it helps stabilize the platform of the 30S subunit. This Caulobacter sp. (strain K31) protein is Small ribosomal subunit protein bS18.